We begin with the raw amino-acid sequence, 504 residues long: Glucose-6-phosphate isomerase (504 aa).

The Proton donor role is filled by glutamate 333. Active-site residues include histidine 364 and lysine 473.

The protein belongs to the GPI family.

The protein localises to the cytoplasm. The catalysed reaction is alpha-D-glucose 6-phosphate = beta-D-fructose 6-phosphate. Its pathway is carbohydrate biosynthesis; gluconeogenesis. The protein operates within carbohydrate degradation; glycolysis; D-glyceraldehyde 3-phosphate and glycerone phosphate from D-glucose: step 2/4. Its function is as follows. Catalyzes the reversible isomerization of glucose-6-phosphate to fructose-6-phosphate. In Xanthomonas axonopodis pv. citri (strain 306), this protein is Glucose-6-phosphate isomerase.